We begin with the raw amino-acid sequence, 941 residues long: Glycine dehydrogenase (decarboxylating) (941 aa).

Lysine 692 bears the N6-(pyridoxal phosphate)lysine mark.

This sequence belongs to the GcvP family. The glycine cleavage system is composed of four proteins: P, T, L and H. It depends on pyridoxal 5'-phosphate as a cofactor.

The enzyme catalyses N(6)-[(R)-lipoyl]-L-lysyl-[glycine-cleavage complex H protein] + glycine + H(+) = N(6)-[(R)-S(8)-aminomethyldihydrolipoyl]-L-lysyl-[glycine-cleavage complex H protein] + CO2. Its function is as follows. The glycine cleavage system catalyzes the degradation of glycine. The P protein binds the alpha-amino group of glycine through its pyridoxal phosphate cofactor; CO(2) is released and the remaining methylamine moiety is then transferred to the lipoamide cofactor of the H protein. This is Glycine dehydrogenase (decarboxylating) from Mycobacterium avium (strain 104).